Consider the following 571-residue polypeptide: Streptolysin O (571 aa).

An N-terminal signal peptide occupies residues 1 to 33 (MSNKKTFKKYSRVAGLLTAALIIGNLVTANAES). Positions 30–108 (NAESNKQNTA…KKSEEDHTEE (79 aa)) are disordered. The span at 37–48 (NTASTETTTTNE) shows a compositional bias: low complexity. Basic and acidic residues-rich tracts occupy residues 50–68 (PKPE…KTDD) and 79–108 (APKE…HTEE). 4 consecutive transmembrane segments (beta stranded) span residues 260–273 (KSQI…NSKI), 280–289 (IDFKSISKGE), 358–367 (SNDVEAAFSA), and 375–387 (KTNG…LENS). The Conserved undecapeptide motif lies at 529 to 539 (ECTGLAWEWWR). The short motif at 561–562 (TL) is the Cholesterol binding element.

The protein belongs to the cholesterol-dependent cytolysin family. In terms of assembly, homooligomeric pore complex of 35 to 50 subunits; when inserted in the host membrane.

The protein localises to the secreted. Its subcellular location is the host cell membrane. In terms of biological role, a cholesterol-dependent toxin that causes cytolysis by forming pores in cholesterol containing host membranes. After binding to target membranes, the protein undergoes a major conformation change, leading to its insertion in the host membrane and formation of an oligomeric pore complex. Cholesterol is required for binding to host membranes, membrane insertion and pore formation; cholesterol binding is mediated by a Thr-Leu pair in the C-terminus. Can be reversibly inactivated by oxidation. The protein is Streptolysin O (slo) of Streptococcus pyogenes serotype M3 (strain ATCC BAA-595 / MGAS315).